Consider the following 382-residue polypeptide: Proton extrusion protein PxcA (382 aa).

The next 4 membrane-spanning stretches (helical) occupy residues 156–176 (TLISLKIILLLILVPLLVQQI), 257–277 (AIKNVLADLAALIAFAFVCII), 305–325 (IILFTDMFVGFHSPEGWQVLL), and 340–360 (FILLFIATFPVILATIFKYWI).

Belongs to the CemA family.

The protein localises to the cell inner membrane. In terms of biological role, required for H(+) efflux immediately after light irradiation to form a rapid H(+) concentration gradient across the thylakoid membranes. Together with PxcL, contributes to transient H(+) uptake following dark to light transition. The chain is Proton extrusion protein PxcA from Prochlorococcus marinus (strain MIT 9313).